Here is a 484-residue protein sequence, read N- to C-terminus: Phosphomethylpyrimidine synthase (484 aa).

Substrate-binding positions include N97, M126, Y156, H192, 212 to 214 (SRG), 253 to 256 (DSLR), and E292. Residue H296 participates in Zn(2+) binding. A substrate-binding site is contributed by Y319. H360 lines the Zn(2+) pocket. 3 residues coordinate [4Fe-4S] cluster: C440, C443, and C448.

The protein belongs to the ThiC family. [4Fe-4S] cluster is required as a cofactor.

It carries out the reaction 5-amino-1-(5-phospho-beta-D-ribosyl)imidazole + S-adenosyl-L-methionine = 4-amino-2-methyl-5-(phosphooxymethyl)pyrimidine + CO + 5'-deoxyadenosine + formate + L-methionine + 3 H(+). The protein operates within cofactor biosynthesis; thiamine diphosphate biosynthesis. Catalyzes the synthesis of the hydroxymethylpyrimidine phosphate (HMP-P) moiety of thiamine from aminoimidazole ribotide (AIR) in a radical S-adenosyl-L-methionine (SAM)-dependent reaction. This Synechococcus sp. (strain CC9605) protein is Phosphomethylpyrimidine synthase.